The following is a 265-amino-acid chain: Tryptophan synthase alpha chain (265 aa).

Residues glutamate 49 and aspartate 60 each act as proton acceptor in the active site.

The protein belongs to the TrpA family. As to quaternary structure, tetramer of two alpha and two beta chains.

It carries out the reaction (1S,2R)-1-C-(indol-3-yl)glycerol 3-phosphate + L-serine = D-glyceraldehyde 3-phosphate + L-tryptophan + H2O. The protein operates within amino-acid biosynthesis; L-tryptophan biosynthesis; L-tryptophan from chorismate: step 5/5. Functionally, the alpha subunit is responsible for the aldol cleavage of indoleglycerol phosphate to indole and glyceraldehyde 3-phosphate. The chain is Tryptophan synthase alpha chain from Desulfatibacillum aliphaticivorans.